The sequence spans 855 residues: Valine--tRNA ligase (855 aa).

Positions 42-52 match the 'HIGH' region motif; sequence PTISGKLHIGH. The 'KMSKS' region motif lies at 574-578; sequence KMSKS. Lys-577 is a binding site for ATP.

The protein belongs to the class-I aminoacyl-tRNA synthetase family. ValS type 2 subfamily. As to quaternary structure, monomer.

It localises to the cytoplasm. The enzyme catalyses tRNA(Val) + L-valine + ATP = L-valyl-tRNA(Val) + AMP + diphosphate. Its function is as follows. Catalyzes the attachment of valine to tRNA(Val). As ValRS can inadvertently accommodate and process structurally similar amino acids such as threonine, to avoid such errors, it has a 'posttransfer' editing activity that hydrolyzes mischarged Thr-tRNA(Val) in a tRNA-dependent manner. The polypeptide is Valine--tRNA ligase (Wolbachia sp. subsp. Brugia malayi (strain TRS)).